The chain runs to 616 residues: Proline--tRNA ligase (616 aa).

The protein belongs to the class-II aminoacyl-tRNA synthetase family. ProS type 1 subfamily. Homodimer.

The protein localises to the cytoplasm. It catalyses the reaction tRNA(Pro) + L-proline + ATP = L-prolyl-tRNA(Pro) + AMP + diphosphate. Functionally, catalyzes the attachment of proline to tRNA(Pro) in a two-step reaction: proline is first activated by ATP to form Pro-AMP and then transferred to the acceptor end of tRNA(Pro). As ProRS can inadvertently accommodate and process non-cognate amino acids such as alanine and cysteine, to avoid such errors it has two additional distinct editing activities against alanine. One activity is designated as 'pretransfer' editing and involves the tRNA(Pro)-independent hydrolysis of activated Ala-AMP. The other activity is designated 'posttransfer' editing and involves deacylation of mischarged Ala-tRNA(Pro). The misacylated Cys-tRNA(Pro) is not edited by ProRS. The chain is Proline--tRNA ligase from Lactococcus lactis subsp. cremoris (strain MG1363).